The sequence spans 239 residues: Regulator of G-protein signaling 20 (239 aa).

The disordered stretch occupies residues 1–29 (MRTANGGPRARASPSASPADPGLPEGSER). Over residues 8-19 (PRARASPSASPA) the composition is skewed to low complexity. An RGS domain is found at 113–229 (SFDNLMVTPA…MNSTVYKDLL (117 aa)).

In terms of assembly, forms a complex with G(alpha)z/i2 subunits and mu-opioid receptors; the formation of this complex results in mu-opioid receptor desensitization. Interacts with OPRM1. Fatty acylated. Heavily palmitoylated in the cysteine string motif. Post-translationally, N- and O-glycosylated in synapsomal membranes. In terms of processing, serine phosphorylated in synapsomal membranes. Sumoylated with SUMO1, SUMO2 and SUMO3. Sumoylation increases binding to the G-proteins, G(alpha)-i2 and G(z), and interaction with mu-opioid receptors.

The protein localises to the membrane. It is found in the nucleus. Its subcellular location is the cytoplasm. Functionally, inhibits signal transduction by increasing the GTPase activity of G protein alpha subunits thereby driving them into their inactive GDP-bound form. Binds selectively to G(z)-alpha and G(alpha)-i2 subunits, accelerates their GTPase activity and regulates their signaling activities. The G(z)-alpha activity is inhibited by the phosphorylation and palmitoylation of the G-protein. Negatively regulates mu-opioid receptor-mediated activation of the G-proteins. The polypeptide is Regulator of G-protein signaling 20 (Rgs20) (Mus musculus (Mouse)).